We begin with the raw amino-acid sequence, 373 residues long: Alanine racemase (373 aa).

Lysine 35 serves as the catalytic Proton acceptor; specific for D-alanine. N6-(pyridoxal phosphate)lysine is present on lysine 35. Arginine 130 is a binding site for substrate. Tyrosine 253 (proton acceptor; specific for L-alanine) is an active-site residue. Substrate is bound at residue methionine 305.

Belongs to the alanine racemase family. Pyridoxal 5'-phosphate is required as a cofactor.

The catalysed reaction is L-alanine = D-alanine. It participates in amino-acid biosynthesis; D-alanine biosynthesis; D-alanine from L-alanine: step 1/1. In terms of biological role, catalyzes the interconversion of L-alanine and D-alanine. May also act on other amino acids. The chain is Alanine racemase (alr) from Cupriavidus necator (strain ATCC 17699 / DSM 428 / KCTC 22496 / NCIMB 10442 / H16 / Stanier 337) (Ralstonia eutropha).